Here is a 629-residue protein sequence, read N- to C-terminus: tRNA uridine 5-carboxymethylaminomethyl modification enzyme MnmG (629 aa).

13-18 contacts FAD; the sequence is GGGHAG. 273–287 serves as a coordination point for NAD(+); the sequence is GPRYCPSIEDKIHRF.

Belongs to the MnmG family. In terms of assembly, homodimer. Heterotetramer of two MnmE and two MnmG subunits. It depends on FAD as a cofactor.

It localises to the cytoplasm. NAD-binding protein involved in the addition of a carboxymethylaminomethyl (cmnm) group at the wobble position (U34) of certain tRNAs, forming tRNA-cmnm(5)s(2)U34. This is tRNA uridine 5-carboxymethylaminomethyl modification enzyme MnmG from Shewanella denitrificans (strain OS217 / ATCC BAA-1090 / DSM 15013).